The chain runs to 162 residues: MSINATARSLLLTEFISAFFLTMRYFFKPKPTINYPFEKNPISPRFRGEHALRRYPNGEERCIACKLCEAVCPAQAITIEAGPRRNDGTRRTVRYDIDMVKCIYCGLCQEACPVDAIVEGPNFEFATETREELYYDKAKLLANGDRWEREIAKAIELDAPYR.

4Fe-4S ferredoxin-type domains follow at residues 52–82 (LRRY…IEAG) and 93–122 (VRYD…EGPN). [4Fe-4S] cluster contacts are provided by Cys-62, Cys-65, Cys-68, Cys-72, Cys-102, Cys-105, Cys-108, and Cys-112.

The protein belongs to the complex I 23 kDa subunit family. As to quaternary structure, NDH-1 is composed of 14 different subunits. Subunits NuoA, H, J, K, L, M, N constitute the membrane sector of the complex. The cofactor is [4Fe-4S] cluster.

It localises to the cell inner membrane. It carries out the reaction a quinone + NADH + 5 H(+)(in) = a quinol + NAD(+) + 4 H(+)(out). In terms of biological role, NDH-1 shuttles electrons from NADH, via FMN and iron-sulfur (Fe-S) centers, to quinones in the respiratory chain. The immediate electron acceptor for the enzyme in this species is believed to be ubiquinone. Couples the redox reaction to proton translocation (for every two electrons transferred, four hydrogen ions are translocated across the cytoplasmic membrane), and thus conserves the redox energy in a proton gradient. The protein is NADH-quinone oxidoreductase subunit I of Nitrobacter winogradskyi (strain ATCC 25391 / DSM 10237 / CIP 104748 / NCIMB 11846 / Nb-255).